The following is a 493-amino-acid chain: MAVLGITVALLVWIATLLLVSIWKQIYRSWNLPPGPFPIPFFGNIFQLDLKDIPKSLTKLAKRFGPVFTLHLGQRRIVVLHGYKAVKEVLLNHKNEFSGRGDIPVFQEYKNKGIIFNNGPTWKDVRRFSLSILRDWGMGKQGNEARIQREAHFLVEELKKTKGQPFDPTFLIGCAPCNVIADILFNKRFDYDDKKCLELMSLFNENFYLLSTPWIQAYNYFSDYLQYLPGSHRKVMKNVSEIRQYTLGKAKEHLKSLDINCPRDVTDCLLIEMEKEKHSQEPMYTMENISVTLADLFFAGTETTSTTLRYGLLILMKYPEIEEKLHEEIDRVIGPSRAPAVRDRMNMPYMDAVVHEIQRFINLVPSNLPHEATRDTVFRGYVIPKGTVVIPTLDSLLFDNYEFPDPETFKPEHFLNENGKFKYSDYFKAFSAGKRVCVGEGLARMELFLLLSAILQHFNLKSLVDPKDIDLSPVTIGFGSIPREFKLCVIPRS.

298–303 is a substrate binding site; that stretch reads FAGTET. Cys-437 lines the heme pocket.

Belongs to the cytochrome P450 family. In terms of assembly, interacts with chaperones HSP70 and HSP90; this interaction is required for initial targeting to mitochondria. Heme is required as a cofactor. In terms of tissue distribution, highest level in the liver and to a lesser extent in the kidney, with a higher level in the male kidney than in the female.

The protein resides in the endoplasmic reticulum membrane. The protein localises to the microsome membrane. Its subcellular location is the mitochondrion inner membrane. It carries out the reaction an organic molecule + reduced [NADPH--hemoprotein reductase] + O2 = an alcohol + oxidized [NADPH--hemoprotein reductase] + H2O + H(+). The catalysed reaction is (5Z,8Z,11Z)-eicosatrienoate + reduced [NADPH--hemoprotein reductase] + O2 = 19-hydroxy-(5Z,8Z,11Z)-eicosatrienoate + oxidized [NADPH--hemoprotein reductase] + H2O + H(+). The enzyme catalyses (5Z,8Z,11Z,14Z,17Z)-eicosapentaenoate + reduced [NADPH--hemoprotein reductase] + O2 = 19-hydroxy-(5Z,8Z,11Z,14Z,17Z)-eicosapentaenoate + oxidized [NADPH--hemoprotein reductase] + H2O + H(+). It catalyses the reaction (4Z,7Z,10Z,13Z,16Z,19Z)-docosahexaenoate + reduced [NADPH--hemoprotein reductase] + O2 = 21-hydroxy-(4Z,7Z,10Z,13Z,16Z,19Z)-docosahexaenoate + oxidized [NADPH--hemoprotein reductase] + H2O + H(+). It carries out the reaction dodecanoate + reduced [NADPH--hemoprotein reductase] + O2 = 11-hydroxydodecanoate + oxidized [NADPH--hemoprotein reductase] + H2O + H(+). The catalysed reaction is tetradecanoate + reduced [NADPH--hemoprotein reductase] + O2 = 13-hydroxytetradecanoate + oxidized [NADPH--hemoprotein reductase] + H2O + H(+). The enzyme catalyses 4-nitrophenol + NADPH + O2 + H(+) = 4-nitrocatechol + NADP(+) + H2O. It functions in the pathway lipid metabolism; fatty acid metabolism. Its activity is regulated as follows. The omega-1 hydroxylase activity is stimulated by cytochrome b5. Functionally, a cytochrome P450 monooxygenase involved in the metabolism of fatty acids. Mechanistically, uses molecular oxygen inserting one oxygen atom into a substrate, and reducing the second into a water molecule, with two electrons provided by NADPH via cytochrome P450 reductase (NADPH--hemoprotein reductase). Catalyzes the hydroxylation of carbon-hydrogen bonds. Hydroxylates fatty acids specifically at the omega-1 position displaying the highest catalytic activity for saturated fatty acids. May be involved in the oxidative metabolism of xenobiotics. This chain is Cytochrome P450 2E1 (Cyp2e1), found in Mus musculus (Mouse).